The following is a 1006-amino-acid chain: Unconventional myosin-Id (1006 aa).

At A2 the chain carries N-acetylalanine. A Myosin motor domain is found at F9–A695. Position 102-109 (G102–T109) interacts with ATP. S200 is modified (phosphoserine). Y536 carries the post-translational modification Phosphotyrosine. Positions M572–D594 are actin-binding. IQ domains follow at residues I699–K719 and T721–H741. Residues G812 to G1005 enclose the TH1 domain.

This sequence belongs to the TRAFAC class myosin-kinesin ATPase superfamily. Myosin family. In terms of assembly, interacts (via the two IQ motifs) with calmodulin. Binds an additional calmodulin chain via a third, C-terminal region. Interacts with F-actin. Expressed in many tissues. Highest levels in brain, followed by lung and ovary; expression is lowest in spleen.

The protein resides in the cytoplasm. Its subcellular location is the perikaryon. It localises to the cell projection. It is found in the dendrite. The protein localises to the early endosome. The protein resides in the cell cortex. Its function is as follows. Unconventional myosin that functions as actin-based motor protein with ATPase activity. Plays a role in endosomal protein trafficking, and especially in the transfer of cargo proteins from early to recycling endosomes. Required for normal planar cell polarity in ciliated tracheal cells, for normal rotational polarity of cilia, and for coordinated, unidirectional ciliary movement in the trachea. Required for normal, polarized cilia organization in brain ependymal epithelial cells. This Homo sapiens (Human) protein is Unconventional myosin-Id (MYO1D).